The following is a 406-amino-acid chain: Vacuole membrane protein 1 (406 aa).

The segment covering methionine 1–asparagine 21 has biased composition (basic and acidic residues). The tract at residues methionine 1–arginine 35 is disordered. N-acetylalanine is present on alanine 2. Topologically, residues alanine 2–asparagine 43 are cytoplasmic. The helical transmembrane segment at isoleucine 44–isoleucine 64 threads the bilayer. The Extracellular segment spans residues leucine 65 to serine 77. Residues isoleucine 78–valine 98 traverse the membrane as a helical segment. Residues histidine 99 to glutamine 109 are Cytoplasmic-facing. The helical transmembrane segment at phenylalanine 110–glycine 130 threads the bilayer. Topologically, residues leucine 131 to lysine 250 are extracellular. Residues glycine 173 to isoleucine 316 form a VTT domain region. A helical membrane pass occupies residues leucine 251–phenylalanine 271. Residues aspartate 272–leucine 273 lie on the Cytoplasmic side of the membrane. Residues alanine 274–isoleucine 294 traverse the membrane as a helical segment. Residues glycine 295 to lysine 305 lie on the Extracellular side of the membrane. A helical membrane pass occupies residues isoleucine 306 to alanine 326. Over valine 327–tryptophan 363 the chain is Cytoplasmic. A helical transmembrane segment spans residues leucine 364–isoleucine 384. Topologically, residues asparagine 385 to lysine 406 are extracellular.

It belongs to the VMP1 family. As to quaternary structure, interacts with BECN1. Interacts with TJP1. Interacts with TP53INP2. Interacts with TMEM41B. Interacts with ATP2A2, PLN and SLN; competes with PLN and SLN to prevent them from forming an inhibitory complex with ATP2A2. Interacts with ATG2A.

Its subcellular location is the endoplasmic reticulum-Golgi intermediate compartment membrane. It is found in the cell membrane. The protein resides in the vacuole membrane. It localises to the endoplasmic reticulum membrane. The catalysed reaction is a 1,2-diacyl-sn-glycero-3-phospho-L-serine(in) = a 1,2-diacyl-sn-glycero-3-phospho-L-serine(out). The enzyme catalyses cholesterol(in) = cholesterol(out). It carries out the reaction a 1,2-diacyl-sn-glycero-3-phosphocholine(in) = a 1,2-diacyl-sn-glycero-3-phosphocholine(out). It catalyses the reaction a 1,2-diacyl-sn-glycero-3-phosphoethanolamine(in) = a 1,2-diacyl-sn-glycero-3-phosphoethanolamine(out). Functionally, phospholipid scramblase involved in lipid homeostasis and membrane dynamics processes. Has phospholipid scramblase activity toward cholesterol and phosphatidylserine, as well as phosphatidylethanolamine and phosphatidylcholine. Required for autophagosome formation: participates in early stages of autophagosome biogenesis at the endoplasmic reticulum (ER) membrane by reequilibrating the leaflets of the ER as lipids are extracted by ATG2 (ATG2A or ATG2B) to mediate autophagosome assembly. Regulates ATP2A2 activity to control ER-isolation membrane contacts for autophagosome formation. In addition to autophagy, involved in other processes in which phospholipid scramblase activity is required. Modulates ER contacts with lipid droplets, mitochondria and endosomes. Plays an essential role in formation of cell junctions. Upon stress such as bacterial and viral infection, promotes formation of cytoplasmic vacuoles followed by cell death. Involved in the cytoplasmic vacuolization of acinar cells during the early stage of acute pancreatitis. In terms of biological role, (Microbial infection) Host factor required for infection by all flaviviruses tested such as Zika virus and Yellow fever virus. Probably required post-entry of the virus to facilitate the ER membrane remodeling necessary to form replication organelles. This chain is Vacuole membrane protein 1, found in Homo sapiens (Human).